The primary structure comprises 336 residues: Large ribosomal subunit protein uL10 (336 aa).

The interval 305-336 (AVVATEEAPKAETKKEEKKEEAAPAAGLGLLF) is disordered. Over residues 311–326 (EAPKAETKKEEKKEEA) the composition is skewed to basic and acidic residues.

Belongs to the universal ribosomal protein uL10 family. In terms of assembly, part of the 50S ribosomal subunit. Forms part of the ribosomal stalk which helps the ribosome interact with GTP-bound translation factors. Forms a heptameric L10(L12)2(L12)2(L12)2 complex, where L10 forms an elongated spine to which the L12 dimers bind in a sequential fashion.

Functionally, forms part of the ribosomal stalk, playing a central role in the interaction of the ribosome with GTP-bound translation factors. This chain is Large ribosomal subunit protein uL10, found in Methanococcus vannielii (strain ATCC 35089 / DSM 1224 / JCM 13029 / OCM 148 / SB).